A 555-amino-acid chain; its full sequence is T-complex protein 1 subunit eta (555 aa).

Belongs to the TCP-1 chaperonin family. Heterooligomeric complex of about 850 to 900 kDa that forms two stacked rings, 12 to 16 nm in diameter.

It localises to the cytoplasm. Its function is as follows. Molecular chaperone; assists the folding of proteins upon ATP hydrolysis. Known to play a role, in vitro, in the folding of actin and tubulin. This chain is T-complex protein 1 subunit eta (cct7), found in Dictyostelium discoideum (Social amoeba).